We begin with the raw amino-acid sequence, 420 residues long: MDSGLYPKTGAPTWFYGWSKQREGGFSDFGSEIFRLRALPPLKAEIFRGIREVVEYNITGDSHPGYPWCKLGSDNKAVLTGFGDLIWDEVAKRFNNMLGYGDAIFSMTPSELVQNGICDAVKVFIKQEPHSLEKVNAGRLRIIAAVGLVDQIVTRLLCMKQNNAEIDCWESCPSAPGMGLNDEGLRTLYSTAQVMAEHGTICETDISGWDWSVQQWELDSDARLRTQLAGEEIGGYLNFFLRVHAYVVGHSVFVMPDGEMLEQTVPGGQLSGDYNTSSSNSRMRVIATMFARYLAGQVSGFPLLGIKAMGDDSFEIWFKGLEEYLGKMGHTVKMCVQRPGLVGFEFCSQVFLGLGIAYPVDFSKTLYRFLSHHPADPKYSEYRAQLMYYFRHLPSSTLQKVIRLAGARVERAQKLATSSN.

A RdRp catalytic domain is found at 199-325 (GTICETDISG…IWFKGLEEYL (127 aa)).

It belongs to the ssRNA positive-strand viruses RNA-directed RNA polymerase family. Might be cleaved to release the mature protein(s).

It catalyses the reaction RNA(n) + a ribonucleoside 5'-triphosphate = RNA(n+1) + diphosphate. Functionally, RNA-dependent RNA polymerase which replicates the viral genome. This chain is RNA-directed RNA polymerase, found in Mushroom bacilliform virus (isolate Australia/AUS LF-1) (MBV).